Reading from the N-terminus, the 588-residue chain is Protein cereblon (588 aa).

Disordered stretches follow at residues 1–107 and 159–197; these read MDDE…DDSD and QERRRSRTSEETSQEAADAEQPNDPPPQQPPRPPIDIGF. The span at 41-50 shows a compositional bias: polar residues; that stretch reads AWNNATQDEQ. Acidic residues predominate over residues 75 to 85; that stretch reads MVEDVLQDDTA. A compositionally biased stretch (polar residues) spans 86 to 96; that stretch reads SEGSHPSSDMS. The segment covering 159–168 has biased composition (basic and acidic residues); sequence QERRRSRTSE. The segment covering 181–192 has biased composition (pro residues); that stretch reads NDPPPQQPPRPP. A Lon N-terminal domain is found at 228 to 454; the sequence is HMLIFLHQHI…LIKSTFKDES (227 aa). The CULT domain maps to 453 to 562; sequence ESLFFCRYCN…LAGSSVRIGK (110 aa). Positions 458, 461, 527, and 530 each coordinate Zn(2+).

Belongs to the CRBN family. Likely a component of a DCX (DDB1-CUL4-X-box) protein ligase complex. May interact with pic/DDB1. In terms of processing, ubiquitinated.

The protein resides in the nucleus. It participates in protein modification; protein ubiquitination. In terms of biological role, substrate recognition component of a DCX (DDB1-CUL4-X-box) E3 protein ligase complex that mediates the ubiquitination and subsequent proteasomal degradation of target proteins. Has an essential role in mediating growth by negatively regulating insulin signaling. It also has a role in maintaining presynaptic function in the neuromuscular junction synapses of third-instar larvae. In Drosophila yakuba (Fruit fly), this protein is Protein cereblon.